Consider the following 590-residue polypeptide: CTP synthase (590 aa).

Positions Met1–Leu278 are amidoligase domain. Ser20 contributes to the CTP binding site. Ser20 is a UTP binding site. Residues Ser21 to Leu26 and Asp78 contribute to the ATP site. Residues Asp78 and Glu152 each contribute to the Mg(2+) site. CTP is bound by residues Asp159–Glu161, Lys199–Gln204, and Lys235. UTP is bound by residues Lys199–Gln204 and Lys235. Residues Arg303–Ala551 form the Glutamine amidotransferase type-1 domain. Gly366 is a binding site for L-glutamine. Cys393 functions as the Nucleophile; for glutamine hydrolysis in the catalytic mechanism. Residues Leu394 to Gln397, Glu416, and Arg477 contribute to the L-glutamine site. Active-site residues include His524 and Glu526. The disordered stretch occupies residues Glu566 to Gly590.

This sequence belongs to the CTP synthase family. Homotetramer.

The enzyme catalyses UTP + L-glutamine + ATP + H2O = CTP + L-glutamate + ADP + phosphate + 2 H(+). It catalyses the reaction L-glutamine + H2O = L-glutamate + NH4(+). It carries out the reaction UTP + NH4(+) + ATP = CTP + ADP + phosphate + 2 H(+). It functions in the pathway pyrimidine metabolism; CTP biosynthesis via de novo pathway; CTP from UDP: step 2/2. Its activity is regulated as follows. Allosterically activated by GTP, when glutamine is the substrate; GTP has no effect on the reaction when ammonia is the substrate. The allosteric effector GTP functions by stabilizing the protein conformation that binds the tetrahedral intermediate(s) formed during glutamine hydrolysis. Inhibited by the product CTP, via allosteric rather than competitive inhibition. In terms of biological role, catalyzes the ATP-dependent amination of UTP to CTP with either L-glutamine or ammonia as the source of nitrogen. Regulates intracellular CTP levels through interactions with the four ribonucleotide triphosphates. The protein is CTP synthase of Mycobacterium leprae (strain Br4923).